Reading from the N-terminus, the 196-residue chain is DnaA initiator-associating protein DiaA (196 aa).

Residues 34–196 (MVQSLLNGNK…DNTLFPHQND (163 aa)) form the SIS domain.

This sequence belongs to the SIS family. DiaA subfamily. As to quaternary structure, homotetramer; dimer of dimers.

Its function is as follows. Required for the timely initiation of chromosomal replication via direct interactions with the DnaA initiator protein. The sequence is that of DnaA initiator-associating protein DiaA from Pectobacterium atrosepticum (strain SCRI 1043 / ATCC BAA-672) (Erwinia carotovora subsp. atroseptica).